The primary structure comprises 448 residues: NADP-specific glutamate dehydrogenase (448 aa).

Positions 88, 109, and 112 each coordinate substrate. The active-site Proton donor is the K124. G163 contributes to the substrate binding site. NADP(+) is bound by residues T207 and N238. S375 is a binding site for substrate.

This sequence belongs to the Glu/Leu/Phe/Val dehydrogenases family. As to quaternary structure, homohexamer.

The catalysed reaction is L-glutamate + NADP(+) + H2O = 2-oxoglutarate + NH4(+) + NADPH + H(+). In terms of biological role, catalyzes the reversible oxidative deamination of glutamate to alpha-ketoglutarate and ammonia. The protein is NADP-specific glutamate dehydrogenase (gdhA) of Psychrobacter sp. (strain TAD1).